The primary structure comprises 309 residues: tRNA uridine(34) hydroxylase (309 aa).

The 96-residue stretch at 137–232 folds into the Rhodanese domain; it reads RGDEVVFFDG…YGEKYGDKGL (96 aa). Residue cysteine 192 is the Cysteine persulfide intermediate of the active site.

This sequence belongs to the TrhO family.

The enzyme catalyses uridine(34) in tRNA + AH2 + O2 = 5-hydroxyuridine(34) in tRNA + A + H2O. Functionally, catalyzes oxygen-dependent 5-hydroxyuridine (ho5U) modification at position 34 in tRNAs. The protein is tRNA uridine(34) hydroxylase of Corynebacterium jeikeium (strain K411).